The primary structure comprises 476 residues: Ribosomal RNA small subunit methyltransferase F (476 aa).

Residues 125-131 (AAAPGSK), Glu-149, Asp-176, and Asp-194 each bind S-adenosyl-L-methionine. Cys-247 acts as the Nucleophile in catalysis.

Belongs to the class I-like SAM-binding methyltransferase superfamily. RsmB/NOP family.

Its subcellular location is the cytoplasm. It catalyses the reaction cytidine(1407) in 16S rRNA + S-adenosyl-L-methionine = 5-methylcytidine(1407) in 16S rRNA + S-adenosyl-L-homocysteine + H(+). Functionally, specifically methylates the cytosine at position 1407 (m5C1407) of 16S rRNA. In Aeromonas salmonicida (strain A449), this protein is Ribosomal RNA small subunit methyltransferase F.